Here is a 427-residue protein sequence, read N- to C-terminus: Enolase (427 aa).

(2R)-2-phosphoglycerate is bound at residue Gln-163. The Proton donor role is filled by Glu-205. 3 residues coordinate Mg(2+): Asp-242, Glu-285, and Asp-312. (2R)-2-phosphoglycerate contacts are provided by Lys-337, Arg-366, Ser-367, and Lys-388. Lys-337 serves as the catalytic Proton acceptor.

The protein belongs to the enolase family. The cofactor is Mg(2+).

The protein resides in the cytoplasm. The protein localises to the secreted. Its subcellular location is the cell surface. It catalyses the reaction (2R)-2-phosphoglycerate = phosphoenolpyruvate + H2O. It functions in the pathway carbohydrate degradation; glycolysis; pyruvate from D-glyceraldehyde 3-phosphate: step 4/5. Catalyzes the reversible conversion of 2-phosphoglycerate (2-PG) into phosphoenolpyruvate (PEP). It is essential for the degradation of carbohydrates via glycolysis. The sequence is that of Enolase from Leptothrix cholodnii (strain ATCC 51168 / LMG 8142 / SP-6) (Leptothrix discophora (strain SP-6)).